The sequence spans 300 residues: Sodium/potassium/calcium exchanger 1 (300 aa).

Residues 1–251 (DPGSQGVGAE…ENEQPLSLEW (251 aa)) are disordered. Composition is skewed to acidic residues over residues 92-102 (GEVEGDEDEGE), 109-119 (GEVEGDEDEGE), 126-136 (GEVEGDEDEGE), 158-175 (GEVEGEDGEVEGGEDEGE), and 215-244 (GDSEDEEEEDEEEDEEEEEEEEEEEEEENE). A helical membrane pass occupies residues 259 to 275 (AIYLFLLPIVFPLWLTV).

This sequence belongs to the Ca(2+):cation antiporter (CaCA) (TC 2.A.19) family. SLC24A subfamily. Post-translationally, the uncleaved signal sequence is required for efficient membrane targeting and proper membrane integration and topology.

It localises to the cell membrane. The catalysed reaction is Ca(2+)(out) + K(+)(out) + 4 Na(+)(in) = Ca(2+)(in) + K(+)(in) + 4 Na(+)(out). Calcium, potassium:sodium antiporter that transports 1 Ca(2+) and 1 K(+) in exchange for 4 Na(+). Critical component of the visual transduction cascade, controlling the calcium concentration of outer segments during light and darkness. Light causes a rapid lowering of cytosolic free calcium in the outer segment of both retinal rod and cone photoreceptors and the light-induced lowering of calcium is caused by extrusion via this protein which plays a key role in the process of light adaptation. In Bison bison (American bison), this protein is Sodium/potassium/calcium exchanger 1 (SLC24A1).